A 126-amino-acid polypeptide reads, in one-letter code: Prostate and testis expressed protein 1 (126 aa).

An N-terminal signal peptide occupies residues 1-21 (MDKSLLLELPILLCCFRALSG). Residues 46 to 125 (VQCRMCHLQF…CRSHDLCNED (80 aa)) form the UPAR/Ly6 domain. Intrachain disulfides connect C48–C75, C51–C60, C67–C94, and C98–C115.

This sequence belongs to the PATE family. In terms of tissue distribution, expressed specifically in prostate cancer, normal prostate, and testis. Expressed in the epithelial cells of the prostate cancer and normal prostate tissues.

Its subcellular location is the secreted. In Homo sapiens (Human), this protein is Prostate and testis expressed protein 1 (PATE1).